Here is a 530-residue protein sequence, read N- to C-terminus: UDP-glucuronosyltransferase 1A8 (530 aa).

Positions 1–25 (MAPSGCPPSLPLCVCLFLASGFAQA) are cleaved as a signal peptide. Residues Asn-71, Asn-292, and Asn-430 are each glycosylated (N-linked (GlcNAc...) asparagine). Residues 488 to 504 (VIGFLLAIVLTVVFIVY) traverse the membrane as a helical segment.

It belongs to the UDP-glycosyltransferase family. As to quaternary structure, homodimers. Homooligomer. Interacts with UGT1A1, UGT1A3, UGT1A4, UGT1A6, UGT1A7, UGT1A8, UGT1A9 and UGT1A10 to form heterodimers.

The protein resides in the endoplasmic reticulum membrane. It carries out the reaction glucuronate acceptor + UDP-alpha-D-glucuronate = acceptor beta-D-glucuronoside + UDP + H(+). The catalysed reaction is 17beta-estradiol + UDP-alpha-D-glucuronate = 17beta-estradiol 3-O-(beta-D-glucuronate) + UDP + H(+). The enzyme catalyses 17alpha-estradiol + UDP-alpha-D-glucuronate = 17alpha-estradiol 3-O-(beta-D-glucuronate) + UDP + H(+). It catalyses the reaction estrone + UDP-alpha-D-glucuronate = estrone 3-O-(beta-D-glucuronate) + UDP + H(+). It carries out the reaction 16alpha,17alpha-estriol + UDP-alpha-D-glucuronate = 16alpha,17alpha-estriol 3-O-(beta-D-glucuronate) + UDP + H(+). The catalysed reaction is 2-hydroxy-17beta-estradiol + UDP-alpha-D-glucuronate = 2-hydroxy-17beta-estradiol 3-O-(beta-D-glucuronate) + UDP + H(+). The enzyme catalyses 2-hydroxy-17beta-estradiol + UDP-alpha-D-glucuronate = 17beta-estradiol 2-O-(beta-D-glucuronate) + UDP + H(+). It catalyses the reaction 2-hydroxyestrone + UDP-alpha-D-glucuronate = 2-hydroxyestrone 3-O-(beta-D-glucuronate) + UDP + H(+). It carries out the reaction 4-hydroxy-17beta-estradiol + UDP-alpha-D-glucuronate = 4-hydroxy-17beta-estradiol 3-O-(beta-D-glucuronate) + UDP + H(+). The catalysed reaction is 4-hydroxy-17beta-estradiol + UDP-alpha-D-glucuronate = 17beta-estradiol 4-O-(beta-D-glucuronate) + UDP + H(+). The enzyme catalyses 4-hydroxyestrone + UDP-alpha-D-glucuronate = 4-hydroxyestrone 3-O-(beta-D-glucuronate) + UDP + H(+). It catalyses the reaction 4-hydroxyestrone + UDP-alpha-D-glucuronate = estrone 4-O-(beta-D-glucuronate) + UDP + H(+). It carries out the reaction 2-methoxy-17beta-estradiol + UDP-alpha-D-glucuronate = 2-methoxy-17beta-estradiol 3-O-(beta-D-glucuronate) + UDP + H(+). The catalysed reaction is 2-methoxyestrone + UDP-alpha-D-glucuronate = 2-methoxyestrone 3-O-(beta-D-glucuronate) + UDP + H(+). The enzyme catalyses 4-methoxy-17beta-estradiol + UDP-alpha-D-glucuronate = 4-methoxy-17beta-estradiol 3-O-(beta-D-glucuronate) + UDP + H(+). It catalyses the reaction 4-methoxyestrone + UDP-alpha-D-glucuronate = 4-methoxyestrone 3-O-(beta-D-glucuronate) + UDP + H(+). It carries out the reaction 17beta-hydroxy-5alpha-androstan-3-one + UDP-alpha-D-glucuronate = 5alpha-dihydrotestosterone 17-O-(beta-D-glucuronate) + UDP + H(+). The catalysed reaction is 5alpha-dihydrotestosterone 17-O-(beta-D-glucuronate) + UDP-alpha-D-glucuronate = 5alpha-dihydrotestosterone 17-O-[beta-D-glucuronosyl-(1-&gt;2)-glucuronate] + UDP + H(+). The enzyme catalyses prunetin + UDP-alpha-D-glucuronate = prunetin-4'-O-beta-D-glucuronide + UDP. It catalyses the reaction prunetin + UDP-alpha-D-glucuronate = prunetin-5-O-beta-D-glucuronide + UDP. It carries out the reaction (E)-ferulate + UDP-alpha-D-glucuronate = (E)-4-O-(beta-D-glucuronosyl)-ferulate + UDP + H(+). The catalysed reaction is (E)-ferulate + UDP-alpha-D-glucuronate = (E)-ferulic acid beta-D-glucuronate ester + UDP. The enzyme catalyses candesartan + UDP-alpha-D-glucuronate = candesartan O-beta-D-glucuronoside + UDP. It catalyses the reaction mycophenolate + UDP-alpha-D-glucuronate = mycophenolate 7-O-beta-D-glucuronide + UDP + H(+). In terms of biological role, UDP-glucuronosyltransferase (UGT) that catalyzes phase II biotransformation reactions in which lipophilic substrates are conjugated with glucuronic acid to increase the metabolite's water solubility, thereby facilitating excretion into either the urine or bile. Essential for the elimination and detoxification of drugs, xenobiotics and endogenous compounds. Catalyzes the glucuronidation of endogenous steroid hormones such as androgens and estrogens. Produces dihydrotestosterone (DHT) diglucuronide from the DHT after two subsequent glucoronidation steps. Involved in the glucuronidation of the phytochemical ferulic acid at the phenolic or the carboxylic acid group. Also catalyzes the glucuronidation of the isoflavones genistein, daidzein, glycitein, formononetin, biochanin A and prunetin, which are phytoestrogens with anticancer and cardiovascular properties. Involved in the glucuronidation of the AGTR1 angiotensin receptor antagonist caderastan, a drug which can inhibit the effect of angiotensin II. Also metabolizes mycophenolate, an immunosuppressive agent. This Rattus norvegicus (Rat) protein is UDP-glucuronosyltransferase 1A8.